A 489-amino-acid polypeptide reads, in one-letter code: Cytochrome P450 monooxygenase orf5 (489 aa).

The chain crosses the membrane as a helical span at residues 13 to 35; the sequence is FVRLLAFHLIGLFVSITVYRLFF. 4 N-linked (GlcNAc...) asparagine glycosylation sites follow: asparagine 37, asparagine 118, asparagine 171, and asparagine 345. Residue cysteine 428 participates in heme binding.

It belongs to the cytochrome P450 family. Requires heme as cofactor.

The protein localises to the membrane. Its pathway is mycotoxin biosynthesis. Functionally, cytochrome P450 monooxygenase; part of the gene cluster that mediates the biosynthesis of brefeldin A (BFA), a protein transport inhibitor that shows antiviral, antifungal, and antitumor properties. The proposed biosynthesis of BFA involves formation of an acyclic polyketide chain that is differentially tailored throughout the backbone. The highly reducing polyketide synthase Bref-PKS is proposed to synthesize the precisely reduced octaketide precursor, which could then be directly offloaded by the thiohydrolase enzyme Bref-TH followed by a cytochrome P450 monooxygenase-mediated formation of the cyclopentane ring and macrocyclization to afford 7-deoxy BFA. Alternatively, the first ring annulation can also occur on the ACP-tethered intermediate before the thiohydrolase release and lactonization. The C7-hydroxylation by another cytochrome P450 monooxygenase is believed to be the final step in the process to obtain the final structure of BFA. In addition to the HRPKS Bref-PKS and the thiohydrolase Bref-TH, the brefeldin A biosynthesis cluster contains 4 cytochrome p450 monooxygenases (called orf3 to orf6), as well a the probable cluster-specific transcription regulator orf8. In Eupenicillium brefeldianum (Penicillium brefeldianum), this protein is Cytochrome P450 monooxygenase orf5.